Consider the following 30-residue polypeptide: Neurotoxin II.22.5 (30 aa).

Residues lysine 1 to lysine 30 enclose the LCN-type CS-alpha/beta domain.

The protein belongs to the long (4 C-C) scorpion toxin superfamily. Sodium channel inhibitor family. Beta subfamily. As to expression, expressed by the venom gland.

It localises to the secreted. In terms of biological role, binds to sodium channels (Nav) and inhibits the inactivation of the activated channels, thereby blocking neuronal transmission. The chain is Neurotoxin II.22.5 from Centruroides tecomanus (Scorpion).